A 415-amino-acid chain; its full sequence is Alpha-2Db adrenergic receptor (415 aa).

The Extracellular segment spans residues 1–33 (MDLSTITFLLPNSSEDTNGTSAPRLPPHSQCAS). Residues Asn12 and Asn18 are each glycosylated (N-linked (GlcNAc...) asparagine). A helical transmembrane segment spans residues 34–58 (VLIVLVVTVIILVTIVGNVLVVVAV). The Cytoplasmic portion of the chain corresponds to 59 to 70 (FTSRALRAPQNL). Residues 71-96 (FLVSLAAADILVATLVIPFSLANEVM) traverse the membrane as a helical segment. The Extracellular segment spans residues 97 to 106 (GYWYLGSTWC). Cys106 and Cys179 are disulfide-bonded. A helical membrane pass occupies residues 107–129 (AFYLALDVLFCTSSIVHLCAISL). At 130 to 150 (DRYWSVTKAVSYNLKRTPRRI) the chain is on the cytoplasmic side. Residues 151–173 (KIMITVVWVISAVISFPPLLMTK) traverse the membrane as a helical segment. The Extracellular segment spans residues 174 to 184 (HDELECLLNNE). Asn183 carries N-linked (GlcNAc...) asparagine glycosylation. A helical transmembrane segment spans residues 185–208 (TWYILSSCIVSFFAPGLIMILVYC). Over 209–339 (RIYRVAKQRA…QMREKRFTFV (131 aa)) the chain is Cytoplasmic. The tract at residues 234 to 299 (QSETCFVRKG…EGAQSCPKPN (66 aa)) is disordered. Over residues 276 to 286 (NRHRNSRFAKS) the composition is skewed to basic residues. Residues 340 to 363 (LAVVMGVFVLCWFPFFFTYSLHAI) traverse the membrane as a helical segment. Residues 364–376 (CRKSCTIPDSLFN) are Extracellular-facing. Residues 377 to 397 (LFFWIGYCNSSVNPIIYTIFN) traverse the membrane as a helical segment. The Cytoplasmic portion of the chain corresponds to 398–415 (RDFRKAFKKIMCRHSTRT).

This sequence belongs to the G-protein coupled receptor 1 family. Adrenergic receptor subfamily. ADRA2D sub-subfamily.

The protein resides in the cell membrane. Its function is as follows. Alpha-2 adrenergic receptors mediate the catecholamine-induced inhibition of adenylate cyclase through the action of G proteins. The order of potency for this receptor is dexmedetomidine &gt; norepinephrine = epinephrine &gt; oxymetazoline. This is Alpha-2Db adrenergic receptor (adra2db) from Danio rerio (Zebrafish).